Consider the following 117-residue polypeptide: MGTSELLKQIYDINLSYLLLAQRIINQEKVSAMFRLGIDEAMADALARLTLPEMVKLAETNQLVCQFRFDDHQSISRLTRESRVEDLQQIHTGILLSSRLLRNVTKEQETPKKRAAS.

It belongs to the FlhD family. In terms of assembly, homodimer; disulfide-linked. Forms a heterohexamer composed of two FlhC and four FlhD subunits. Each FlhC binds a FlhD dimer, forming a heterotrimer, and a hexamer assembles by dimerization of two heterotrimers.

Its subcellular location is the cytoplasm. Its function is as follows. Functions in complex with FlhC as a master transcriptional regulator that regulates transcription of several flagellar and non-flagellar operons by binding to their promoter region. Activates expression of class 2 flagellar genes, including fliA, which is a flagellum-specific sigma factor that turns on the class 3 genes. Also regulates genes whose products function in a variety of physiological pathways. The chain is Flagellar transcriptional regulator FlhD from Erwinia amylovora (strain CFBP1430).